Reading from the N-terminus, the 230-residue chain is N-(5'-phosphoribosyl)anthranilate isomerase (230 aa).

Belongs to the TrpF family.

The enzyme catalyses N-(5-phospho-beta-D-ribosyl)anthranilate = 1-(2-carboxyphenylamino)-1-deoxy-D-ribulose 5-phosphate. The protein operates within amino-acid biosynthesis; L-tryptophan biosynthesis; L-tryptophan from chorismate: step 3/5. This is N-(5'-phosphoribosyl)anthranilate isomerase from Ralstonia nicotianae (strain ATCC BAA-1114 / GMI1000) (Ralstonia solanacearum).